The following is a 407-amino-acid chain: Protein phosphatase methylesterase 1 (407 aa).

The disordered stretch occupies residues 1–53 (MSDLQKSFAKSKLAKLPPEPPPIPESVADEDDDSGSSTETVTPSPVKQLFARP). Active-site residues include Ser-185, Asp-211, and His-342. The span at 388-401 (GAGVPLGKAEGGTT) shows a compositional bias: gly residues. Residues 388–407 (GAGVPLGKAEGGTTGSFKRS) are disordered.

The protein belongs to the AB hydrolase superfamily.

The enzyme catalyses [phosphatase 2A protein]-C-terminal L-leucine methyl ester + H2O = [phosphatase 2A protein]-C-terminal L-leucine + methanol + H(+). Functionally, demethylates proteins that have been reversibly carboxymethylated. Demethylates the phosphatase PP2A catalytic subunit. The protein is Protein phosphatase methylesterase 1 (ppe1) of Emericella nidulans (strain FGSC A4 / ATCC 38163 / CBS 112.46 / NRRL 194 / M139) (Aspergillus nidulans).